We begin with the raw amino-acid sequence, 838 residues long: Probable beta-glucosidase I (838 aa).

2 N-linked (GlcNAc...) asparagine glycosylation sites follow: Asn-57 and Asn-197. Residue Asp-225 is part of the active site. Residues 395–555 (EGEKGFKFRV…GQEELISKAA (161 aa)) form the PA14 domain. Residue Asn-493 is glycosylated (N-linked (GlcNAc...) asparagine).

It belongs to the glycosyl hydrolase 3 family.

It is found in the secreted. It catalyses the reaction Hydrolysis of terminal, non-reducing beta-D-glucosyl residues with release of beta-D-glucose.. It participates in glycan metabolism; cellulose degradation. Beta-glucosidases are one of a number of cellulolytic enzymes involved in the degradation of cellulosic biomass. Catalyzes the last step releasing glucose from the inhibitory cellobiose. The chain is Probable beta-glucosidase I (bglI) from Aspergillus clavatus (strain ATCC 1007 / CBS 513.65 / DSM 816 / NCTC 3887 / NRRL 1 / QM 1276 / 107).